The chain runs to 135 residues: MLSGQLVVRLFSMASRVCMSRGSAGSGVIGPVEAAIRTKLEQALNPEVLELRNESGGHAVPPGSETHFRVAVVSSRFEGLSPLQRHRLVHAALSEELAGPVHALAIQARTPAQWKENPQLDTSPACLGGSKKSRN.

S81 is subject to Phosphoserine. Positions 114-135 are disordered; it reads WKENPQLDTSPACLGGSKKSRN.

Belongs to the BolA/IbaG family. Interacts with GLRX5.

The protein resides in the mitochondrion. In terms of biological role, acts as a mitochondrial iron-sulfur (Fe-S) cluster assembly factor that facilitates (Fe-S) cluster insertion into a subset of mitochondrial proteins. Probably acts together with the monothiol glutaredoxin GLRX5. May protect cells against oxidative stress. The sequence is that of BolA-like protein 1 (BOLA1) from Bos taurus (Bovine).